A 366-amino-acid chain; its full sequence is Peptide chain release factor 2 (366 aa).

Glutamine 253 carries the post-translational modification N5-methylglutamine.

Belongs to the prokaryotic/mitochondrial release factor family. Methylated by PrmC. Methylation increases the termination efficiency of RF2.

It localises to the cytoplasm. Its function is as follows. Peptide chain release factor 2 directs the termination of translation in response to the peptide chain termination codons UGA and UAA. This is Peptide chain release factor 2 (prfB) from Buchnera aphidicola subsp. Baizongia pistaciae (strain Bp).